The chain runs to 162 residues: UPF0178 protein Rsph17029_2512 (162 aa).

It belongs to the UPF0178 family.

The protein is UPF0178 protein Rsph17029_2512 of Cereibacter sphaeroides (strain ATCC 17029 / ATH 2.4.9) (Rhodobacter sphaeroides).